A 605-amino-acid chain; its full sequence is Acetyl-coenzyme A carboxylase carboxyl transferase subunits beta/alpha (605 aa).

An acetyl-coenzyme A carboxylase carboxyl transferase subunit beta region spans residues 1 to 269 (MFKGLFKKTK…QRAEFLLKHG (269 aa)). A CoA carboxyltransferase N-terminal domain is found at 40-306 (LWEKCDSCKS…SRMLDGNDCS (267 aa)). The interval 40 to 570 (LWEKCDSCKS…KNNLLKTLDN (531 aa)) is carboxyltransferase. 4 residues coordinate Zn(2+): cysteine 44, cysteine 47, cysteine 63, and cysteine 66. The C4-type zinc-finger motif lies at 44–66 (CDSCKSIIYAEDLKKNYHICHEC). The tract at residues 270-593 (FVDKVINRKE…YEKFRSIGRF (324 aa)) is acetyl-coenzyme A carboxylase carboxyl transferase subunit alpha. The 254-residue stretch at 317-570 (ASAKSVEEIR…KNNLLKTLDN (254 aa)) folds into the CoA carboxyltransferase C-terminal domain.

This sequence in the N-terminal section; belongs to the AccD/PCCB family. It in the C-terminal section; belongs to the AccA family. Acetyl-CoA carboxylase is a heterotetramer composed of biotin carboxyl carrier protein (AccB), biotin carboxylase (AccC) and two subunits of ACCase subunit beta/alpha. Zn(2+) is required as a cofactor.

The protein resides in the cytoplasm. It catalyses the reaction N(6)-carboxybiotinyl-L-lysyl-[protein] + acetyl-CoA = N(6)-biotinyl-L-lysyl-[protein] + malonyl-CoA. It functions in the pathway lipid metabolism; malonyl-CoA biosynthesis; malonyl-CoA from acetyl-CoA: step 1/1. Its function is as follows. Component of the acetyl coenzyme A carboxylase (ACC) complex. Biotin carboxylase (BC) catalyzes the carboxylation of biotin on its carrier protein (BCCP) and then the CO(2) group is transferred by the transcarboxylase to acetyl-CoA to form malonyl-CoA. The sequence is that of Acetyl-coenzyme A carboxylase carboxyl transferase subunits beta/alpha (accD) from Natranaerobius thermophilus (strain ATCC BAA-1301 / DSM 18059 / JW/NM-WN-LF).